Here is a 203-residue protein sequence, read N- to C-terminus: Hydra actinoporin-like toxin 2 (203 aa).

A signal peptide spans 1–21 (MLSYLCFGCFLVSASLEIACG). Residues 175-177 (RGG) carry the Cell attachment site motif.

It belongs to the actinoporin family. HALT subfamily. As to quaternary structure, octamer or nonamer in membranes. Monomer in the soluble state. In vitro, interacts with folate receptor alpha (of target organism). Strongly expressed in the gland and mucous cells in the endoderm.

Its subcellular location is the nematocyst. It localises to the secreted. It is found in the target cell membrane. In terms of biological role, pore-forming protein that forms hydrophilic pores and causes cytolysis. Compared to equinatoxin-2 (AC P61914), it reveals lower cytolysis activity (5-12-fold difference, tested on erythrocytes), a larger pore size (probably 2-3 nm) and different affinity to membrane lipids (100-fold lower affinity to sphingomyelin). Binds to sulfatides (SFT). Shows cytolytic activity on HeLa cells, with a different potency than its paralogs (from most potent to less potent: HALT-4&gt;HALT-6~HALT-1&gt;HALT-3&gt;HALT-7&gt;HALT-2). Pore formation is a multi-step process that involves specific recognition of membrane lipid by a protein aromatic residues rich region, firm binding to the membrane (mainly driven by hydrophobic interactions) accompanied by the transfer of the N-terminal region to the lipid-water interface and finally pore formation after oligomerization of monomers. In vitro, binds to the folate receptor alpha (FOLR1), a GPI-anchored membrane protein that plays a major role in the uptake of folate/folic acid into cells via endocytosis, suggesting a possible involvement of this receptor in the mechanism of HALT-1-induced cell lysis. In vivo, does not cause visible paralysis in larvae of the blowfly Sarcophaga faculata, the most common arthropod prey of Hydra. This chain is Hydra actinoporin-like toxin 2, found in Hydra vulgaris (Hydra).